The following is a 423-amino-acid chain: MLDPKILRQNLEHVVEKLRRRGFEMDSDTFLQLENKRKEAQLAIQSFQTKRNQLSKTIGMAKSKGENPELLMAEVSQLNDELKQEEANFETIQKAFSDFQLAIPNLPHDSVPDGKSENDNREIRQWGAPPGFDFTPKDHTVLGERDNQLDFEAAAKLSGARFVVLRGSLARAHRALAQFMLDLHTDQHGYEEVYVPYLVHEECLYGTGQLPKFREEQFQVAGDRNFFLVPTGEVPLVNLARDEIIEAPALPKKWVAQTPCFRSEAGSYGKDVRGMIRQHQFQKVELVQLVQPENSYQALEEITRQAEKVLQLLALPYRVVELCAGDLGFAAAKTYDLEVWLPSQNKYREISSCSNCEDFQARRIQARWRNPKTGKPELLHTLNGSGLAVGRTLVAVMENYQQADGHIRVPDALKSYMGGVDYF.

231-233 (TGE) contacts L-serine. 262 to 264 (RSE) serves as a coordination point for ATP. Position 285 (E285) interacts with L-serine. 349–352 (EISS) contributes to the ATP binding site. S385 is an L-serine binding site.

Belongs to the class-II aminoacyl-tRNA synthetase family. Type-1 seryl-tRNA synthetase subfamily. Homodimer. The tRNA molecule binds across the dimer.

Its subcellular location is the cytoplasm. It catalyses the reaction tRNA(Ser) + L-serine + ATP = L-seryl-tRNA(Ser) + AMP + diphosphate + H(+). The enzyme catalyses tRNA(Sec) + L-serine + ATP = L-seryl-tRNA(Sec) + AMP + diphosphate + H(+). Its pathway is aminoacyl-tRNA biosynthesis; selenocysteinyl-tRNA(Sec) biosynthesis; L-seryl-tRNA(Sec) from L-serine and tRNA(Sec): step 1/1. In terms of biological role, catalyzes the attachment of serine to tRNA(Ser). Is also able to aminoacylate tRNA(Sec) with serine, to form the misacylated tRNA L-seryl-tRNA(Sec), which will be further converted into selenocysteinyl-tRNA(Sec). This is Serine--tRNA ligase from Coxiella burnetii (strain RSA 331 / Henzerling II).